The primary structure comprises 456 residues: Bifunctional protein GlmU (456 aa).

Residues 1–229 (MLNNAMSVVI…LSEVEGVNNR (229 aa)) form a pyrophosphorylase region. UDP-N-acetyl-alpha-D-glucosamine contacts are provided by residues 11-14 (LAAG), K25, Q76, 81-82 (GT), 103-105 (YGD), G140, E154, N169, and N227. D105 lines the Mg(2+) pocket. Residue N227 coordinates Mg(2+). A linker region spans residues 230–250 (LQLSRLERVYQSEQAEKLLLA). Residues 251–456 (GVMLRDPARF…EGWRRPVKKK (206 aa)) form an N-acetyltransferase region. Positions 333 and 351 each coordinate UDP-N-acetyl-alpha-D-glucosamine. H363 functions as the Proton acceptor in the catalytic mechanism. Y366 and N377 together coordinate UDP-N-acetyl-alpha-D-glucosamine. Acetyl-CoA is bound by residues A380, 386–387 (NY), S405, A423, and R440.

It in the N-terminal section; belongs to the N-acetylglucosamine-1-phosphate uridyltransferase family. The protein in the C-terminal section; belongs to the transferase hexapeptide repeat family. Homotrimer. The cofactor is Mg(2+).

It localises to the cytoplasm. The catalysed reaction is alpha-D-glucosamine 1-phosphate + acetyl-CoA = N-acetyl-alpha-D-glucosamine 1-phosphate + CoA + H(+). The enzyme catalyses N-acetyl-alpha-D-glucosamine 1-phosphate + UTP + H(+) = UDP-N-acetyl-alpha-D-glucosamine + diphosphate. It participates in nucleotide-sugar biosynthesis; UDP-N-acetyl-alpha-D-glucosamine biosynthesis; N-acetyl-alpha-D-glucosamine 1-phosphate from alpha-D-glucosamine 6-phosphate (route II): step 2/2. Its pathway is nucleotide-sugar biosynthesis; UDP-N-acetyl-alpha-D-glucosamine biosynthesis; UDP-N-acetyl-alpha-D-glucosamine from N-acetyl-alpha-D-glucosamine 1-phosphate: step 1/1. The protein operates within bacterial outer membrane biogenesis; LPS lipid A biosynthesis. In terms of biological role, catalyzes the last two sequential reactions in the de novo biosynthetic pathway for UDP-N-acetylglucosamine (UDP-GlcNAc). The C-terminal domain catalyzes the transfer of acetyl group from acetyl coenzyme A to glucosamine-1-phosphate (GlcN-1-P) to produce N-acetylglucosamine-1-phosphate (GlcNAc-1-P), which is converted into UDP-GlcNAc by the transfer of uridine 5-monophosphate (from uridine 5-triphosphate), a reaction catalyzed by the N-terminal domain. The chain is Bifunctional protein GlmU from Shigella flexneri serotype 5b (strain 8401).